We begin with the raw amino-acid sequence, 163 residues long: Putative pre-16S rRNA nuclease (163 aa).

The protein belongs to the YqgF nuclease family.

It is found in the cytoplasm. Could be a nuclease involved in processing of the 5'-end of pre-16S rRNA. The sequence is that of Putative pre-16S rRNA nuclease from Rhodopseudomonas palustris (strain BisB18).